We begin with the raw amino-acid sequence, 520 residues long: tRNA-2-methylthio-N(6)-dimethylallyladenosine synthase (520 aa).

One can recognise an MTTase N-terminal domain in the interval 77-195 (KKFLIRTYGC…LPHLLRDAIF (119 aa)). [4Fe-4S] cluster is bound by residues cysteine 86, cysteine 122, cysteine 156, cysteine 232, cysteine 236, and cysteine 239. The region spanning 218–448 (RKNKTQAWVN…ALVNDISNKR (231 aa)) is the Radical SAM core domain. A TRAM domain is found at 450 to 513 (LDYQDKIVEV…TWSLDGEIVS (64 aa)).

It belongs to the methylthiotransferase family. MiaB subfamily. Monomer. It depends on [4Fe-4S] cluster as a cofactor.

Its subcellular location is the cytoplasm. It catalyses the reaction N(6)-dimethylallyladenosine(37) in tRNA + (sulfur carrier)-SH + AH2 + 2 S-adenosyl-L-methionine = 2-methylsulfanyl-N(6)-dimethylallyladenosine(37) in tRNA + (sulfur carrier)-H + 5'-deoxyadenosine + L-methionine + A + S-adenosyl-L-homocysteine + 2 H(+). In terms of biological role, catalyzes the methylthiolation of N6-(dimethylallyl)adenosine (i(6)A), leading to the formation of 2-methylthio-N6-(dimethylallyl)adenosine (ms(2)i(6)A) at position 37 in tRNAs that read codons beginning with uridine. The protein is tRNA-2-methylthio-N(6)-dimethylallyladenosine synthase of Shouchella clausii (strain KSM-K16) (Alkalihalobacillus clausii).